We begin with the raw amino-acid sequence, 384 residues long: S-adenosylmethionine synthase (384 aa).

Residue H16 coordinates ATP. D18 serves as a coordination point for Mg(2+). E44 provides a ligand contact to K(+). E57 and Q100 together coordinate L-methionine. Residues 100 to 110 (QSADIAMGVDE) are flexible loop. Residues 165–167 (DAK), D240, 246–247 (RK), A263, and K267 contribute to the ATP site. D240 lines the L-methionine pocket. K271 is an L-methionine binding site.

The protein belongs to the AdoMet synthase family. In terms of assembly, homotetramer; dimer of dimers. It depends on Mg(2+) as a cofactor. Requires K(+) as cofactor.

Its subcellular location is the cytoplasm. The enzyme catalyses L-methionine + ATP + H2O = S-adenosyl-L-methionine + phosphate + diphosphate. The protein operates within amino-acid biosynthesis; S-adenosyl-L-methionine biosynthesis; S-adenosyl-L-methionine from L-methionine: step 1/1. Its function is as follows. Catalyzes the formation of S-adenosylmethionine (AdoMet) from methionine and ATP. The overall synthetic reaction is composed of two sequential steps, AdoMet formation and the subsequent tripolyphosphate hydrolysis which occurs prior to release of AdoMet from the enzyme. In Teredinibacter turnerae (strain ATCC 39867 / T7901), this protein is S-adenosylmethionine synthase.